Consider the following 320-residue polypeptide: Acetyl-coenzyme A carboxylase carboxyl transferase subunit alpha (320 aa).

Positions 33–294 (AFDGEIESLR…GDAVEEELKA (262 aa)) constitute a CoA carboxyltransferase C-terminal domain.

This sequence belongs to the AccA family. In terms of assembly, acetyl-CoA carboxylase is a heterohexamer composed of biotin carboxyl carrier protein (AccB), biotin carboxylase (AccC) and two subunits each of ACCase subunit alpha (AccA) and ACCase subunit beta (AccD).

The protein resides in the cytoplasm. It carries out the reaction N(6)-carboxybiotinyl-L-lysyl-[protein] + acetyl-CoA = N(6)-biotinyl-L-lysyl-[protein] + malonyl-CoA. It participates in lipid metabolism; malonyl-CoA biosynthesis; malonyl-CoA from acetyl-CoA: step 1/1. Its function is as follows. Component of the acetyl coenzyme A carboxylase (ACC) complex. First, biotin carboxylase catalyzes the carboxylation of biotin on its carrier protein (BCCP) and then the CO(2) group is transferred by the carboxyltransferase to acetyl-CoA to form malonyl-CoA. The polypeptide is Acetyl-coenzyme A carboxylase carboxyl transferase subunit alpha (Phenylobacterium zucineum (strain HLK1)).